The sequence spans 694 residues: Elongation factor G (694 aa).

Positions Asp-8–Leu-282 constitute a tr-type G domain. GTP contacts are provided by residues Ala-17 to Thr-24, Asp-81 to His-85, and Asn-135 to Asp-138. The disordered stretch occupies residues Ile-284–Asp-303.

It belongs to the TRAFAC class translation factor GTPase superfamily. Classic translation factor GTPase family. EF-G/EF-2 subfamily.

The protein localises to the cytoplasm. Functionally, catalyzes the GTP-dependent ribosomal translocation step during translation elongation. During this step, the ribosome changes from the pre-translocational (PRE) to the post-translocational (POST) state as the newly formed A-site-bound peptidyl-tRNA and P-site-bound deacylated tRNA move to the P and E sites, respectively. Catalyzes the coordinated movement of the two tRNA molecules, the mRNA and conformational changes in the ribosome. The sequence is that of Elongation factor G from Symbiobacterium thermophilum (strain DSM 24528 / JCM 14929 / IAM 14863 / T).